The following is a 134-amino-acid chain: Putative nickel-responsive regulator (134 aa).

Ni(2+) contacts are provided by histidine 78, histidine 89, histidine 91, and cysteine 97.

It belongs to the transcriptional regulatory CopG/NikR family. Requires Ni(2+) as cofactor.

Transcriptional regulator. The polypeptide is Putative nickel-responsive regulator (Chlorobaculum tepidum (strain ATCC 49652 / DSM 12025 / NBRC 103806 / TLS) (Chlorobium tepidum)).